The primary structure comprises 331 residues: 6-phosphogluconolactonase (331 aa).

This sequence belongs to the cycloisomerase 2 family.

It carries out the reaction 6-phospho-D-glucono-1,5-lactone + H2O = 6-phospho-D-gluconate + H(+). It participates in carbohydrate degradation; pentose phosphate pathway; D-ribulose 5-phosphate from D-glucose 6-phosphate (oxidative stage): step 2/3. Functionally, catalyzes the hydrolysis of 6-phosphogluconolactone to 6-phosphogluconate. This Serratia proteamaculans (strain 568) protein is 6-phosphogluconolactonase.